Reading from the N-terminus, the 534-residue chain is Beta-1,2-xylosyltransferase (534 aa).

Over 1-11 (MSKRNPKILKI) the chain is Cytoplasmic. The chain crosses the membrane as a helical; Signal-anchor for type II membrane protein span at residues 12-34 (FLYMLLLNSLFLIIYFVFHSSSF). Topologically, residues 35–534 (SPEQSQPPHI…LTEIMKSLGC (500 aa)) are lumenal. Residues asparagine 51, asparagine 301, and asparagine 479 are each glycosylated (N-linked (GlcNAc...) asparagine).

In terms of processing, glycosylation at least at one of the two sites Asn-51 and Asn-301 is necessary for enzyme stability and activity.

The protein resides in the golgi apparatus membrane. It carries out the reaction N(4)-{beta-D-GlcNAc-(1-&gt;2)-alpha-D-Man-(1-&gt;3)-[beta-D-GlcNAc-(1-&gt;2)-alpha-D-Man-(1-&gt;6)]-beta-D-Man-(1-&gt;4)-beta-D-GlcNAc-(1-&gt;4)-beta-D-GlcNAc}-L-asparaginyl-[protein] + UDP-alpha-D-xylose = N(4)-{beta-D-GlcNAc-(1-&gt;2)-alpha-D-Man-(1-&gt;3)-[beta-D-GlcNAc-(1-&gt;2)-alpha-D-Man-(1-&gt;6)]-[beta-D-Xyl-(1-&gt;2)]-beta-D-Man-(1-&gt;4)-beta-D-GlcNAc-(1-&gt;4)-beta-D-GlcNAc}-L-asparaginyl-[protein] + UDP + H(+). The protein operates within protein modification; protein glycosylation. In terms of biological role, glycosyltransferase involved in the xylosylation of N-glycans. Possesses beta-1,2-xylosyltransferase activity, transferring xylose from UDP-xylose to the core beta-linked mannose of N-glycans. Involved in the biosynthesis of glycoprotein bound N-glycans. Does not require metal ions for its activity. The polypeptide is Beta-1,2-xylosyltransferase (Arabidopsis thaliana (Mouse-ear cress)).